The following is a 235-amino-acid chain: NAD-dependent protein deacylase (235 aa).

The 235-residue stretch at 1-235 folds into the Deacetylase sirtuin-type domain; it reads MDLRLFKNIV…VPRFITQFLE (235 aa). 14-33 lines the NAD(+) pocket; it reads GAGISAESGIRTFRDQDGLW. Substrate is bound by residues Tyr-58 and Arg-61. Residue 95–98 coordinates NAD(+); it reads QNVD. Catalysis depends on His-113, which acts as the Proton acceptor. Residues Cys-121, Cys-124, Cys-140, and Cys-143 each contribute to the Zn(2+) site. Residues 180–182, 204–206, and Ala-222 contribute to the NAD(+) site; these read GTS and NLK.

It belongs to the sirtuin family. Class III subfamily. It depends on Zn(2+) as a cofactor.

It localises to the cytoplasm. It carries out the reaction N(6)-acetyl-L-lysyl-[protein] + NAD(+) + H2O = 2''-O-acetyl-ADP-D-ribose + nicotinamide + L-lysyl-[protein]. It catalyses the reaction N(6)-succinyl-L-lysyl-[protein] + NAD(+) + H2O = 2''-O-succinyl-ADP-D-ribose + nicotinamide + L-lysyl-[protein]. NAD-dependent lysine deacetylase and desuccinylase that specifically removes acetyl and succinyl groups on target proteins. Modulates the activities of several proteins which are inactive in their acylated form. The protein is NAD-dependent protein deacylase of Bdellovibrio bacteriovorus (strain ATCC 15356 / DSM 50701 / NCIMB 9529 / HD100).